A 197-amino-acid chain; its full sequence is Gastrula zinc finger protein XlCGF17.1 (197 aa).

C2H2-type zinc fingers lie at residues 6–28 (ISCSECGKCFIKSSELTVHQMTH), 34–56 (YSCSECGKCFASLSHLRVHQKIH), 62–84 (FSCSECGKCFLNRGSLVRHHRTH), 90–112 (FFCSECGKRFAASSDLRVHRRTH), 118–140 (FSCSECEKRFLNPWSLVRHYRTH), 146–169 (FSCSECGKCFARSSDLTVHRRRSH), and 175–197 (FSCSECGKCFTSSSELTVHLRTH).

It belongs to the krueppel C2H2-type zinc-finger protein family.

It is found in the nucleus. Functionally, may be involved in transcriptional regulation. The protein is Gastrula zinc finger protein XlCGF17.1 of Xenopus laevis (African clawed frog).